Reading from the N-terminus, the 722-residue chain is Pesticidal crystal protein Cry22Aa (722 aa).

Promotes colloidosmotic lysis by binding to the midgut epithelial cells of hymenopteran species. The chain is Pesticidal crystal protein Cry22Aa (cry22Aa) from Bacillus thuringiensis.